A 115-amino-acid polypeptide reads, in one-letter code: U3-lycotoxin-Ls1k (115 aa).

The N-terminal stretch at 1-20 (MKSVLLFGVLLVTLFSYSSA) is a signal peptide. The propeptide occupies 21–44 (EMLDDFDQADEDELLSLIEKEEAR). 4 cysteine pairs are disulfide-bonded: Cys-48-Cys-63, Cys-55-Cys-72, Cys-62-Cys-87, and Cys-74-Cys-85.

Belongs to the neurotoxin 19 (CSTX) family. 01 subfamily. In terms of tissue distribution, expressed by the venom gland.

Its subcellular location is the secreted. This chain is U3-lycotoxin-Ls1k, found in Lycosa singoriensis (Wolf spider).